A 216-amino-acid polypeptide reads, in one-letter code: SYKVSGGLLRVGVSVVNALSKKLHLTIHRAGQIHEQEYAHGDPQYPLKVVGETDTSGTTVRFWPSEWTFSQTIFSVDILARRLRELSFLNAGVRIVLRDERVNLEHIYDYEVGLSEKSALDIAGLPGKLADCQEKDPALSELYLVEGDSAGGSAKQGRNRKMQAILPLKGKILNVERARFDKMISSQEVGTLITALGCGIGREEYNPDKLRYHKII.

Residues 140–216 (SELYLVEGDS…PDKLRYHKII (77 aa)) form the Toprim domain.

Belongs to the type II topoisomerase GyrB family. In terms of assembly, heterotetramer, composed of two GyrA and two GyrB chains. In the heterotetramer, GyrA contains the active site tyrosine that forms a transient covalent intermediate with DNA, while GyrB binds cofactors and catalyzes ATP hydrolysis.

It localises to the cytoplasm. The catalysed reaction is ATP-dependent breakage, passage and rejoining of double-stranded DNA.. A type II topoisomerase that negatively supercoils closed circular double-stranded (ds) DNA in an ATP-dependent manner to modulate DNA topology and maintain chromosomes in an underwound state. Negative supercoiling favors strand separation, and DNA replication, transcription, recombination and repair, all of which involve strand separation. Also able to catalyze the interconversion of other topological isomers of dsDNA rings, including catenanes and knotted rings. Type II topoisomerases break and join 2 DNA strands simultaneously in an ATP-dependent manner. The sequence is that of DNA gyrase subunit B (gyrB) from Acinetobacter sp. (strain T4).